A 327-amino-acid chain; its full sequence is 1-aminocyclopropane-1-carboxylate oxidase 1 (327 aa).

The Fe2OG dioxygenase domain occupies Pro-157 to Pro-257. Fe cation contacts are provided by His-181, Asp-183, and His-238.

This sequence belongs to the iron/ascorbate-dependent oxidoreductase family. It depends on Fe cation as a cofactor.

It catalyses the reaction 1-aminocyclopropane-1-carboxylate + L-ascorbate + O2 = ethene + L-dehydroascorbate + hydrogen cyanide + CO2 + 2 H2O. It functions in the pathway alkene biosynthesis; ethylene biosynthesis via S-adenosyl-L-methionine; ethylene from S-adenosyl-L-methionine: step 2/2. The polypeptide is 1-aminocyclopropane-1-carboxylate oxidase 1 (ACO1) (Doritaenopsis sp. (Moth orchid)).